Consider the following 459-residue polypeptide: Phosphoglucosamine mutase (459 aa).

The active-site Phosphoserine intermediate is the serine 106. Serine 106, aspartate 247, aspartate 249, and aspartate 251 together coordinate Mg(2+). Serine 106 is subject to Phosphoserine.

This sequence belongs to the phosphohexose mutase family. Mg(2+) is required as a cofactor. In terms of processing, activated by phosphorylation.

It catalyses the reaction alpha-D-glucosamine 1-phosphate = D-glucosamine 6-phosphate. Catalyzes the conversion of glucosamine-6-phosphate to glucosamine-1-phosphate. The chain is Phosphoglucosamine mutase from Chlamydia muridarum (strain MoPn / Nigg).